The chain runs to 50 residues: Defensin D2 (50 aa).

4 disulfide bridges follow: C3-C50, C14-C35, C20-C44, and C24-C46.

In terms of processing, contains 4 disulfide bonds.

Its subcellular location is the secreted. Functionally, antimicrobial peptide active against fungi, Gram-positive and Gram-negative bacteria. Inhibits growth of hyphae in the fungi A.niger (IC(50)=3.5 ug/ml), B.sorokiniana (IC(50)=1.8 ug/ml), F.oxysporum (IC(50)=5.3 ug/ml), F.graminearum (IC(50)=6.9 ug/ml), F.culmorum (IC(50)=6.9 ug/ml) and B.cinerea (IC(50)=13.7 ug/ml). Has no effect on spore germination. Destroys spores in germinated conidia by disruption of cell walls and membranes in A.niger and B.sorokiniana. Causes vacuolization of germinated macro- and microconidia in F.oxysporum, F.graminearum and F.culmorum. Strongly inhibits growth of P.infestans on potato tubers above concentrations of 3.4 ug/ml. Inhibits growth of Gram-positive bacteria C.michiganensis and B.subtilis and of Gram-negative bacteria P.syringae, E.carotovora and E.coli. This Nigella sativa (Black cumin) protein is Defensin D2.